The following is a 1473-amino-acid chain: Sulfite reductase [NADPH] subunit beta (1473 aa).

Residues 728–876 (LTILFASDGG…AYNLWEPELW (149 aa)) form the Flavodoxin-like domain. The [4Fe-4S] cluster site is built by C1328, C1334, C1373, and C1377. C1377 is a binding site for siroheme.

Belongs to the nitrite and sulfite reductase 4Fe-4S domain family. In terms of assembly, alpha(2)-beta(2). The alpha component is a flavoprotein, the beta component is a hemoprotein. The cofactor is siroheme. Requires [4Fe-4S] cluster as cofactor.

The protein resides in the cytoplasm. It catalyses the reaction hydrogen sulfide + 3 NADP(+) + 3 H2O = sulfite + 3 NADPH + 4 H(+). It participates in sulfur metabolism; hydrogen sulfide biosynthesis; hydrogen sulfide from sulfite (NADPH route): step 1/1. In terms of biological role, catalyzes the reduction of sulfite to sulfide, one of several activities required for the biosynthesis of L-cysteine from sulfate. This is Sulfite reductase [NADPH] subunit beta (sir1) from Schizosaccharomyces pombe (strain 972 / ATCC 24843) (Fission yeast).